A 192-amino-acid polypeptide reads, in one-letter code: MSEYLLLLIGTVLVNNFVLVKFLGLCPFMGVSGKLESAIGMSMATTFVLTLASVLSFLVNQYLLAPFDLTYLRTMSFILVIAVVVQFTEMLVQKTSASLHRALGIYLPLITTNCAVLGVALLNVNEQHDFLESAIYGFGAAVGFSLVLILFSAMRERLAAADVPMPFRGGAIAMITAGLMSLAFMGFTGLVK.

Transmembrane regions (helical) follow at residues 5-25 (LLLL…FLGL), 39-59 (IGMS…SFLV), 72-92 (LRTM…EMLV), 102-122 (ALGI…VALL), 134-154 (AIYG…FSAM), and 171-191 (AIAM…TGLV).

This sequence belongs to the NqrDE/RnfAE family. As to quaternary structure, the complex is composed of six subunits: RnfA, RnfB, RnfC, RnfD, RnfE and RnfG.

Its subcellular location is the cell inner membrane. Its function is as follows. Part of a membrane-bound complex that couples electron transfer with translocation of ions across the membrane. This is Ion-translocating oxidoreductase complex subunit A from Shewanella amazonensis (strain ATCC BAA-1098 / SB2B).